A 214-amino-acid chain; its full sequence is tRNA (guanine-N(7)-)-methyltransferase (214 aa).

4 residues coordinate S-adenosyl-L-methionine: E44, E69, D96, and D118. The active site involves D118. Residues K122, D154, and 191–194 each bind substrate; that span reads TEYE.

Belongs to the class I-like SAM-binding methyltransferase superfamily. TrmB family.

It catalyses the reaction guanosine(46) in tRNA + S-adenosyl-L-methionine = N(7)-methylguanosine(46) in tRNA + S-adenosyl-L-homocysteine. Its pathway is tRNA modification; N(7)-methylguanine-tRNA biosynthesis. Catalyzes the formation of N(7)-methylguanine at position 46 (m7G46) in tRNA. The chain is tRNA (guanine-N(7)-)-methyltransferase from Listeria monocytogenes serotype 4b (strain F2365).